We begin with the raw amino-acid sequence, 300 residues long: Protoheme IX farnesyltransferase 1 (300 aa).

Transmembrane regions (helical) follow at residues 28–48 (VVAL…PTIL), 54–74 (VAGL…NHLI), 100–120 (ALLF…VFTN), 122–142 (LTAW…TAYL), 149–169 (NIVI…TAVT), 176–196 (ALLL…ALAI), 222–242 (CILL…LVGM), 243–263 (SGPL…YKAW), and 280–300 (FSIY…YLWA).

The protein belongs to the UbiA prenyltransferase family. Protoheme IX farnesyltransferase subfamily.

The protein localises to the cell inner membrane. The catalysed reaction is heme b + (2E,6E)-farnesyl diphosphate + H2O = Fe(II)-heme o + diphosphate. Its pathway is porphyrin-containing compound metabolism; heme O biosynthesis; heme O from protoheme: step 1/1. In terms of biological role, converts heme B (protoheme IX) to heme O by substitution of the vinyl group on carbon 2 of heme B porphyrin ring with a hydroxyethyl farnesyl side group. The sequence is that of Protoheme IX farnesyltransferase 1 from Shewanella sp. (strain MR-4).